A 241-amino-acid polypeptide reads, in one-letter code: Proteasome subunit beta type-1 (241 aa).

An N-acetylmethionine modification is found at Met-1. Residues 1–28 (MLSSVAAYSGAGRDLAMEPHSSVGPLQL) constitute a propeptide that is removed on maturation. An O-linked (GlcNAc) serine glycan is attached at Ser-58. Residues Ser-62 and Ser-68 each carry the phosphoserine modification. Residue Tyr-150 is modified to Phosphotyrosine. Ser-162 carries the post-translational modification Phosphoserine. An N6-acetyllysine modification is found at Lys-204. Ser-209 is a glycosylation site (O-linked (GlcNAc) serine).

Belongs to the peptidase T1B family. In terms of assembly, the 26S proteasome consists of a 20S proteasome core and two 19S regulatory subunits. The 20S proteasome core is a barrel-shaped complex made of 28 subunits that are arranged in four stacked rings. The two outer rings are each formed by seven alpha subunits, and the two inner rings are formed by seven beta subunits. The proteolytic activity is exerted by three beta-subunits PSMB5, PSMB6 and PSMB7. Interacts with SERPINB2. Interacts with RFPL4A.

The protein localises to the cytoplasm. It localises to the nucleus. Its function is as follows. Non-catalytic component of the 20S core proteasome complex involved in the proteolytic degradation of most intracellular proteins. This complex plays numerous essential roles within the cell by associating with different regulatory particles. Associated with two 19S regulatory particles, forms the 26S proteasome and thus participates in the ATP-dependent degradation of ubiquitinated proteins. The 26S proteasome plays a key role in the maintenance of protein homeostasis by removing misfolded or damaged proteins that could impair cellular functions, and by removing proteins whose functions are no longer required. Associated with the PA200 or PA28, the 20S proteasome mediates ubiquitin-independent protein degradation. This type of proteolysis is required in several pathways including spermatogenesis (20S-PA200 complex) or generation of a subset of MHC class I-presented antigenic peptides (20S-PA28 complex). This is Proteasome subunit beta type-1 (PSMB1) from Bos taurus (Bovine).